The following is a 197-amino-acid chain: Cell division protein SepF (197 aa).

Residues 15-91 (DEEEVESPEE…PPSKSNGKNV (77 aa)) are disordered. Residues 22 to 31 (PEERQRRVVQ) are compositionally biased toward basic and acidic residues. The segment covering 37 to 47 (TNNVQQNQPQQ) has biased composition (low complexity). Polar residues-rich tracts occupy residues 48–58 (SERSYSNQSKL) and 78–91 (RMNQ…GKNV).

The protein belongs to the SepF family. As to quaternary structure, homodimer. Interacts with FtsZ.

Its subcellular location is the cytoplasm. Cell division protein that is part of the divisome complex and is recruited early to the Z-ring. Probably stimulates Z-ring formation, perhaps through the cross-linking of FtsZ protofilaments. Its function overlaps with FtsA. The polypeptide is Cell division protein SepF (Staphylococcus haemolyticus (strain JCSC1435)).